The sequence spans 228 residues: MQKLKQQVFEANMDLPRYGLVTFTWGNVSAIDRERGLVVIKPSGVAYETMKADDMVVVDMSGKVVEGEYRPSSDTATHLELYRRYPSLGGIVHTHSTHATAWAQAGLAIPALGTTHADYFFGDIPYTRGLSEEEVQGEYELNTGKVIIETLGNAEPLHTPGIVVYQHGPFAWGKDAHDAVHNAVVMEEVAKMAWIARSINPQLNHIDSFLMNKHFMRKHGPNAYYGQK.

Residues 26–27 (GN), 43–44 (SG), and 72–73 (SS) contribute to the substrate site. Aspartate 74, histidine 93, and histidine 95 together coordinate Zn(2+). The Proton donor/acceptor role is filled by aspartate 118. Histidine 167 lines the Zn(2+) pocket. Residue tyrosine 225 is the Proton donor/acceptor of the active site.

The protein belongs to the aldolase class II family. AraD/FucA subfamily. Requires Zn(2+) as cofactor.

It catalyses the reaction L-ribulose 5-phosphate = D-xylulose 5-phosphate. Its pathway is cofactor degradation; L-ascorbate degradation; D-xylulose 5-phosphate from L-ascorbate: step 4/4. Its function is as follows. Catalyzes the isomerization of L-ribulose 5-phosphate to D-xylulose 5-phosphate. Is involved in the anaerobic L-ascorbate utilization. The chain is L-ribulose-5-phosphate 4-epimerase UlaF from Escherichia coli O139:H28 (strain E24377A / ETEC).